The primary structure comprises 969 residues: RNA polymerase-associated protein RapA (969 aa).

The region spanning glutamate 162 to aspartate 339 is the Helicase ATP-binding domain. An ATP-binding site is contributed by aspartate 175–threonine 182. Positions aspartate 285–histidine 288 match the DEAH box motif. The 172-residue stretch at arginine 492 to glycine 663 folds into the Helicase C-terminal domain.

Belongs to the SNF2/RAD54 helicase family. RapA subfamily. Interacts with the RNAP. Has a higher affinity for the core RNAP than for the holoenzyme. Its ATPase activity is stimulated by binding to RNAP.

Transcription regulator that activates transcription by stimulating RNA polymerase (RNAP) recycling in case of stress conditions such as supercoiled DNA or high salt concentrations. Probably acts by releasing the RNAP, when it is trapped or immobilized on tightly supercoiled DNA. Does not activate transcription on linear DNA. Probably not involved in DNA repair. The sequence is that of RNA polymerase-associated protein RapA from Actinobacillus pleuropneumoniae serotype 7 (strain AP76).